Here is a 101-residue protein sequence, read N- to C-terminus: Apolipoprotein C-II (101 aa).

The N-terminal stretch at 1–22 is a signal peptide; sequence MGTRFLLALFLVLLVLGFEVQG. Residues 66-74 form a lipid binding region; sequence TVDEKLRDM. The interval 78–101 is lipoprotein lipase cofactor; it reads STAAMSTYAGILTDQVLSMLKGEE.

Belongs to the apolipoprotein C2 family. Proapolipoprotein C-II is synthesized as a sialic acid containing glycoprotein which is subsequently desialylated prior to its proteolytic processing. In terms of processing, proapolipoprotein C-II, the major form found in plasma undergoes proteolytic cleavage of its N-terminal hexapeptide to generate apolipoprotein C-II, which occurs as the minor form in plasma.

It is found in the secreted. Functionally, component of chylomicrons, very low-density lipoproteins (VLDL), low-density lipoproteins (LDL), and high-density lipoproteins (HDL) in plasma. Plays an important role in lipoprotein metabolism as an activator of lipoprotein lipase. Both proapolipoprotein C-II and apolipoprotein C-II can activate lipoprotein lipase. This Aotus nancymaae (Ma's night monkey) protein is Apolipoprotein C-II (APOC2).